The primary structure comprises 64 residues: Large ribosomal subunit protein eL37 (64 aa).

Residues Cys-20, Cys-23, Cys-35, and Cys-38 each coordinate Zn(2+). The C4-type zinc finger occupies 20–38 (CRRCGRRAYHVRKKACAAC).

Belongs to the eukaryotic ribosomal protein eL37 family. Zn(2+) is required as a cofactor.

Functionally, binds to the 23S rRNA. The protein is Large ribosomal subunit protein eL37 of Methanococcus vannielii (strain ATCC 35089 / DSM 1224 / JCM 13029 / OCM 148 / SB).